Here is a 262-residue protein sequence, read N- to C-terminus: GTP cyclohydrolase 1 type 2 homolog (262 aa).

Residues His-64, His-65, Asp-103, His-224, and Glu-228 each contribute to the a divalent metal cation site.

This sequence belongs to the GTP cyclohydrolase I type 2/NIF3 family. In terms of assembly, homohexamer.

The sequence is that of GTP cyclohydrolase 1 type 2 homolog from Clostridium perfringens (strain 13 / Type A).